The chain runs to 325 residues: Beta-ketoacyl-[acyl-carrier-protein] synthase III 2 (325 aa).

Residues C113 and H250 contribute to the active site. The ACP-binding stretch occupies residues 251–255 (SANLR). The active site involves N280.

This sequence belongs to the thiolase-like superfamily. FabH family. In terms of assembly, homodimer.

It localises to the cytoplasm. The catalysed reaction is 3-methylbutanoyl-CoA + malonyl-[ACP] + H(+) = 5-methyl-3-oxohexanoyl-[ACP] + CO2 + CoA. It carries out the reaction 2-methylpropanoyl-CoA + malonyl-[ACP] + H(+) = 4-methyl-3-oxopentanoyl-[ACP] + CO2 + CoA. It catalyses the reaction (2S)-2-methylbutanoyl-CoA + malonyl-[ACP] + H(+) = (4S)-4-methyl-3-oxohexanoyl-[ACP] + CO2 + CoA. The enzyme catalyses malonyl-[ACP] + acetyl-CoA + H(+) = 3-oxobutanoyl-[ACP] + CO2 + CoA. The catalysed reaction is malonyl-[ACP] + propanoyl-CoA + H(+) = 3-oxopentanoyl-[ACP] + CO2 + CoA. It carries out the reaction butanoyl-CoA + malonyl-[ACP] + H(+) = 3-oxohexanoyl-[ACP] + CO2 + CoA. It catalyses the reaction pentanoyl-CoA + malonyl-[ACP] + H(+) = 3-oxoheptanoyl-[ACP] + CO2 + CoA. The enzyme catalyses hexanoyl-CoA + malonyl-[ACP] + H(+) = 3-oxooctanoyl-[ACP] + CO2 + CoA. The catalysed reaction is heptanoyl-CoA + malonyl-[ACP] + H(+) = 3-oxononanoyl-[ACP] + CO2 + CoA. It participates in lipid metabolism; fatty acid biosynthesis. In terms of biological role, catalyzes the condensation reaction of fatty acid synthesis by the addition to an acyl acceptor of two carbons from malonyl-ACP. Catalyzes the first condensation reaction which initiates fatty acid synthesis and may therefore play a role in governing the total rate of fatty acid production. Possesses both acetoacetyl-ACP synthase and acetyl transacylase activities. Has some substrate specificity for branched chain acyl-CoA, determining the biosynthesis of branched-chain of fatty acids instead of straight-chain. This chain is Beta-ketoacyl-[acyl-carrier-protein] synthase III 2, found in Bacillus subtilis (strain 168).